A 287-amino-acid chain; its full sequence is uncharacterized protein (287 aa).

Helical transmembrane passes span 7–28, 32–54, 67–86, 91–113, 120–139, 144–163, 170–192, 202–224, 231–253, and 263–280; these read LLLT…RAAL, AIDA…AVLL, GWRG…YAYV, GTGA…LLRG, ALLG…LPGA, LGGA…YTLL, PLAV…LLAF, GLAY…WYSA, IQGA…LLLG, and ATLA…PRLG. EamA domains are found at residues 15–136 and 155–276; these read LAFA…FLLL and LAWG…LILA.

It localises to the cell membrane. This is an uncharacterized protein from Pseudomonas aeruginosa (strain ATCC 15692 / DSM 22644 / CIP 104116 / JCM 14847 / LMG 12228 / 1C / PRS 101 / PAO1).